Consider the following 596-residue polypeptide: Thioredoxin reductase 1, mitochondrial (596 aa).

The segment at 59-87 is disordered; that stretch reads LTGQRGSRDSTGATGGNAPAGSGAGAPPP. The span at 68–79 shows a compositional bias: low complexity; sequence STGATGGNAPAG. FAD-binding positions include 120–126, 143–147, 159–170, 233–235, 262–266, Ser-282, Phe-286, and Tyr-302; these read IGGGSAG, LDFVK, GGTCVNVGCIPK, GLG, and AVGGR. Cysteines 162 and 167 form a disulfide. NADP(+) is bound by residues 322-328 and Pro-355; that span reads VRSIVLR. Residues 392–399, 429–432, 438–443, and Phe-472 each bind FAD; these read RKGLVDDL, VGDI, and ELTPVA. His-569 serves as the catalytic Proton acceptor. Residue Pro-570 coordinates FAD. An intrachain disulfide couples Cys-594 to Cys-595.

It belongs to the class-I pyridine nucleotide-disulfide oxidoreductase family. Homodimer. The cofactor is FAD. In terms of tissue distribution, during embryogenesis, expression is seen in germ cell progenitors, developing midgut, hindgut and proventriculus.

Its subcellular location is the mitochondrion. The protein localises to the cytoplasm. The catalysed reaction is [thioredoxin]-dithiol + NADP(+) = [thioredoxin]-disulfide + NADPH + H(+). Functionally, thioredoxin system is a major player in glutathione metabolism, due to the demonstrated absence of a glutathione reductase. Functionally interacts with the Sod/Cat reactive oxidation species (ROS) defense system and thereby has a role in preadult development and life span. Lack of a glutathione reductase suggests antioxidant defense in Drosophila, and probably in related insects, differs fundamentally from that in other organisms. In Drosophila melanogaster (Fruit fly), this protein is Thioredoxin reductase 1, mitochondrial.